The following is a 150-amino-acid chain: Troponin C, isotype gamma (150 aa).

M1 is modified (N-acetylmethionine). EF-hand domains lie at 7–42 (EQLS…MGVK), 43–78 (ISEK…FLIE), 83–118 (ALKA…LDNR), and 119–150 (LTED…MMSG). The Ca(2+) site is built by D56, D58, S60, E62, and E67. Residues D132, D134, S136, T138, and E143 each coordinate Ca(2+).

This sequence belongs to the troponin C family.

Functionally, troponin is the central regulatory protein of striated muscle contraction. Tn consists of three components: Tn-I which is the inhibitor of actomyosin ATPase, Tn-T which contains the binding site for tropomyosin and Tn-C. The binding of calcium to Tn-C abolishes the inhibitory action of Tn on actin filaments. The sequence is that of Troponin C, isotype gamma from Astacus leptodactylus (Turkish narrow-clawed crayfish).